Reading from the N-terminus, the 157-residue chain is MIRIGQGFDVHQLVPQRPLIIGGVTLPYEKGLLGHSDADVLTHAIIDAILGAAGLGDIGQLFPETDPQFKNANSVNLLKKVNEKVGRSGFTIGNIDCTILAEEPKMSPYLAEMKKNLAASCHLAVTQVNIKATTMETMGFVGKKEGIGAIAVALLEK.

Residues Asp-9 and His-11 each coordinate a divalent metal cation. Residues 9–11 (DVH) and 35–36 (HS) each bind 4-CDP-2-C-methyl-D-erythritol 2-phosphate. His-43 contacts a divalent metal cation. Residues 57–59 (DIG), 62–66 (FPETD), 133–136 (TTME), Phe-140, and Lys-143 each bind 4-CDP-2-C-methyl-D-erythritol 2-phosphate.

This sequence belongs to the IspF family. In terms of assembly, homotrimer. The cofactor is a divalent metal cation.

The catalysed reaction is 4-CDP-2-C-methyl-D-erythritol 2-phosphate = 2-C-methyl-D-erythritol 2,4-cyclic diphosphate + CMP. The protein operates within isoprenoid biosynthesis; isopentenyl diphosphate biosynthesis via DXP pathway; isopentenyl diphosphate from 1-deoxy-D-xylulose 5-phosphate: step 4/6. In terms of biological role, involved in the biosynthesis of isopentenyl diphosphate (IPP) and dimethylallyl diphosphate (DMAPP), two major building blocks of isoprenoid compounds. Catalyzes the conversion of 4-diphosphocytidyl-2-C-methyl-D-erythritol 2-phosphate (CDP-ME2P) to 2-C-methyl-D-erythritol 2,4-cyclodiphosphate (ME-CPP) with a corresponding release of cytidine 5-monophosphate (CMP). In Enterococcus faecalis (strain ATCC 700802 / V583), this protein is 2-C-methyl-D-erythritol 2,4-cyclodiphosphate synthase.